The sequence spans 201 residues: Holliday junction branch migration complex subunit RuvA (201 aa).

A domain I region spans residues 1–63 (MIASVRGEVL…EDSMTLYGFA (63 aa)). The segment at 64-142 (DTEARDLFGL…LVPVQAGPPG (79 aa)) is domain II. Residues 143–153 (STPAVAATPVR) form a flexible linker region. The domain III stretch occupies residues 153 to 201 (REQVVEALTGLGFPLKQAEQALDTVLAEQPAADTSTALRAALSLLGKNR).

The protein belongs to the RuvA family. In terms of assembly, homotetramer. Forms an RuvA(8)-RuvB(12)-Holliday junction (HJ) complex. HJ DNA is sandwiched between 2 RuvA tetramers; dsDNA enters through RuvA and exits via RuvB. An RuvB hexamer assembles on each DNA strand where it exits the tetramer. Each RuvB hexamer is contacted by two RuvA subunits (via domain III) on 2 adjacent RuvB subunits; this complex drives branch migration. In the full resolvosome a probable DNA-RuvA(4)-RuvB(12)-RuvC(2) complex forms which resolves the HJ.

The protein resides in the cytoplasm. Its function is as follows. The RuvA-RuvB-RuvC complex processes Holliday junction (HJ) DNA during genetic recombination and DNA repair, while the RuvA-RuvB complex plays an important role in the rescue of blocked DNA replication forks via replication fork reversal (RFR). RuvA specifically binds to HJ cruciform DNA, conferring on it an open structure. The RuvB hexamer acts as an ATP-dependent pump, pulling dsDNA into and through the RuvAB complex. HJ branch migration allows RuvC to scan DNA until it finds its consensus sequence, where it cleaves and resolves the cruciform DNA. This is Holliday junction branch migration complex subunit RuvA from Nocardia farcinica (strain IFM 10152).